The sequence spans 123 residues: CD59 glycoprotein (123 aa).

Positions 1–25 (MGSKGGFILLWLLSILAVLCHLGHS) are cleaved as a signal peptide. The UPAR/Ly6 domain maps to 26 to 103 (LQCYNCINPA…LCNKSDATIS (78 aa)). Disulfide bonds link C28/C51, C31/C38, C44/C65, C71/C89, and C90/C95. N43 carries N-linked (GlcNAc...) asparagine glycosylation. A lipid anchor (GPI-anchor amidated serine) is attached at S98. The propeptide at 99-123 (DATISSGKTALLVILLLVATWHFCL) is removed in mature form.

Interacts with T-cell surface antigen CD2. N- and O-glycosylated. In terms of tissue distribution, expressed in all tissues tested (lung, testis liver, kidney, spleen, heart and skeletal muscle). Highest levels in lung and spleen, lowest levels in liver and skeletal muscle.

Its subcellular location is the cell membrane. The protein localises to the secreted. Its function is as follows. Potent inhibitor of the complement membrane attack complex (MAC) action, which protects self-cells from damage during complement activation. Acts by binding to the beta-haipins of C8 (C8A and C8B) components of the assembling MAC, forming an intermolecular beta-sheet that prevents incorporation of the multiple copies of C9 required for complete formation of the osmolytic pore. This Sus scrofa (Pig) protein is CD59 glycoprotein.